The sequence spans 273 residues: Tryptophan synthase alpha chain (273 aa).

Catalysis depends on proton acceptor residues glutamate 56 and aspartate 67.

Belongs to the TrpA family. Tetramer of two alpha and two beta chains.

The enzyme catalyses (1S,2R)-1-C-(indol-3-yl)glycerol 3-phosphate + L-serine = D-glyceraldehyde 3-phosphate + L-tryptophan + H2O. It functions in the pathway amino-acid biosynthesis; L-tryptophan biosynthesis; L-tryptophan from chorismate: step 5/5. In terms of biological role, the alpha subunit is responsible for the aldol cleavage of indoleglycerol phosphate to indole and glyceraldehyde 3-phosphate. The polypeptide is Tryptophan synthase alpha chain (Shewanella baltica (strain OS155 / ATCC BAA-1091)).